The chain runs to 375 residues: Succinyl-diaminopimelate desuccinylase (375 aa).

Position 66 (H66) interacts with Zn(2+). D68 is a catalytic residue. D99 provides a ligand contact to Zn(2+). E133 serves as the catalytic Proton acceptor. Zn(2+) contacts are provided by E134, E162, and H348.

The protein belongs to the peptidase M20A family. DapE subfamily. In terms of assembly, homodimer. Zn(2+) serves as cofactor. Co(2+) is required as a cofactor.

The enzyme catalyses N-succinyl-(2S,6S)-2,6-diaminopimelate + H2O = (2S,6S)-2,6-diaminopimelate + succinate. It functions in the pathway amino-acid biosynthesis; L-lysine biosynthesis via DAP pathway; LL-2,6-diaminopimelate from (S)-tetrahydrodipicolinate (succinylase route): step 3/3. Its function is as follows. Catalyzes the hydrolysis of N-succinyl-L,L-diaminopimelic acid (SDAP), forming succinate and LL-2,6-diaminopimelate (DAP), an intermediate involved in the bacterial biosynthesis of lysine and meso-diaminopimelic acid, an essential component of bacterial cell walls. The protein is Succinyl-diaminopimelate desuccinylase of Escherichia coli O157:H7.